The following is a 631-amino-acid chain: 30-kDa cleavage and polyadenylation specificity factor 30 (631 aa).

The segment at 12-38 (EGGLDSGPVQNTASVPVAPPENSSSAA) is disordered. 3 C3H1-type zinc fingers span residues 60–87 (SFRQ…HQFD), 88–112 (KARM…VYKH), and 114–141 (NEDI…HAKL). The tract at residues 179–234 (QDRPQGQVPMQGQPQESGNLQQQQQQQPQQSQHQVSQTLIPNPADQTNRTSHPLPQ) is disordered. Residues 182 to 215 (PQGQVPMQGQPQESGNLQQQQQQQPQQSQHQVSQ) show a composition bias toward low complexity. Polar residues predominate over residues 216–231 (TLIPNPADQTNRTSHP). One can recognise a YTH domain in the interval 237-372 (NRYFVVKSNN…SVGEQLASLL (136 aa)). Residues 392–407 (EEEKAKGVNPESRAEN) show a composition bias toward basic and acidic residues. Disordered stretches follow at residues 392–447 (EEEK…RGIM) and 541–631 (PHMG…KKRR). A compositionally biased stretch (acidic residues) spans 412 to 432 (PFEDNEEEEEEEDESEEEEES). Over residues 573–583 (KTPERSDERGV) the composition is skewed to basic and acidic residues. Residues serine 610 and serine 612 each carry the phosphoserine modification. Over residues 621–631 (RSRHGEGKKRR) the composition is skewed to basic residues.

The protein belongs to the CPSF4/YTH1 family. As to quaternary structure, component of the cleavage and polyadenylation specificity factor (CPSF) complex. Can form homodimers. Binds to calmodulin. Forms a complex with cleavage and polyadenylation specificity factor (CPSF) subunits CPSF73-I, CPSF73-II, CPSF100, CPSF160, CFIS2, FIPS3, FIPS5, PAPS2, PAPS3, CLPS3, PCFS1, PCFS4, CSTF50 and CSTF77. Expressed in seedlings, roots, leaves, siliques, stems and flowers.

Its subcellular location is the nucleus. It is found in the cytoplasm. Its activity is regulated as follows. Endonuclease activity is repressed by the N-terminal domain of FIPS5. Nuclease activity is inhibited by zinc (&gt;100 uM), cadmium in a progressive manner (50 percent activity at 1 mM Cd(2+)), and high salt levels (e.g. KCl or NaCl &gt;600 mM). Stimulated by ATP in the presence of Zn(2+), even at inhibitory zinc concentrations. Elevated temperatures prevent RNA-binding at 55 degrees Celsius, but endonuclease activity at 70 degrees Celsius. The sulfhydryl reagent dithiothreitol (DTT) inhibits both RNA-binding and nuclease activities. Functionally, component of the cleavage and polyadenylation specificity factor (CPSF) complex that play a key role in pre-mRNA 3'-end formation. May interact with poly(A) polymerase and other factors to bring about cleavage and poly(A) addition. Mediates poly(A) site selection. Binds RNA in a calcium-dependent manner. Exhibits endonuclease activity with an ability to nick and degrade linear as well as circular single-stranded RNA that leaves RNA 3' ends with hydroxyl groups, thus mediating processing of the pre-mRNA as a prelude to the polyadenylation. Involved in the post-transcriptional control, probably via poly(A) addition, of the responses of plants to stress, especially genes mediating tolerance to oxidative stress. Plays a role in the regulation of salicylic acid (SA) production via the control of messenger RNA 3' end processing, thus being a key component of programmed cell death and plant immune responses required for resistance to virulent Pseudomonas syringae pv tomato DC3000 (Pst). This chain is 30-kDa cleavage and polyadenylation specificity factor 30, found in Arabidopsis thaliana (Mouse-ear cress).